Consider the following 99-residue polypeptide: DNA-binding protein Fis (99 aa).

Residues 75 to 94 constitute a DNA-binding region (H-T-H motif); sequence QTRAAIMMGINRGTLRKKLK.

Belongs to the transcriptional regulatory Fis family. As to quaternary structure, homodimer.

Functionally, activates ribosomal RNA transcription. Plays a direct role in upstream activation of rRNA promoters. This is DNA-binding protein Fis from Tolumonas auensis (strain DSM 9187 / NBRC 110442 / TA 4).